The following is a 397-amino-acid chain: MQDSSSSNYSSNRNFVMMLVILFLMEFARGMYILSYINFLPTVTSIAIAITSFAFSIHFIADAATNFVIGFLLKKFGSKLVLTSGFLLAFISLFLVIWFPASPFIIIFSAIMLGIAVSPIWVIMLSSVDERNRGKQMGYVYFSWLLGLLVGMVIMNLLIKFHPTRFAFLMALVVLIAWVLYYFVNINLTNYNTKPVKAQLKQIVDVTQRHLILFPGILLQGAAIAALVPILPKYATQVVKVSTVEYTVAIIIGGIGCAFSMLFLSKIIDNNSKGFMYGVIFSGFILYTILIFGLSTITNIYIVWAIGLFIGLMYGILLPAWNTFMAGHINPNEQEETWGVFNSVQGFGSMIGPLVGGLITQFTNNLNNTFYFSAMIFLALAVFYGYYFIKTNRRVKP.

A run of 12 helical transmembrane segments spans residues 15–34 (FVMM…MYIL), 46–73 (IAIA…GFLL), 80–99 (LVLT…VIWF), 105–126 (IIIF…IMLS), 138–159 (GYVY…NLLI), 165–184 (RFAF…YYFV), 211–231 (LILF…VPIL), 243–263 (TVEY…SMLF), 275–294 (FMYG…IFGL), 300–320 (IYIV…LLPA), 340–363 (VFNS…TQFT), and 369–389 (TFYF…YYFI).

The protein belongs to the major facilitator superfamily. LtaA family.

The protein localises to the cell membrane. Its pathway is cell wall biogenesis; lipoteichoic acid biosynthesis. Functionally, proton-coupled antiporter flippase that catalyzes the translocation, from the inner to the outer leaflet of the cell membrane, of the lipid-linked disaccharide (anchor-LLD) that anchors lipoteichoic acids (LTA) to the cell membrane. The polypeptide is Proton-coupled antiporter flippase LtaA (ltaA) (Staphylococcus epidermidis (strain ATCC 35984 / DSM 28319 / BCRC 17069 / CCUG 31568 / BM 3577 / RP62A)).